We begin with the raw amino-acid sequence, 2349 residues long: Reducing polyketide synthase AFT16-1 (2349 aa).

Residues 1-14 (MNGKSRDNGHDGKR) are compositionally biased toward basic and acidic residues. Disordered regions lie at residues 1 to 21 (MNGK…VPAE) and 37 to 80 (TNPS…TSNS). Residues 20 to 462 (AEPIAIVGTA…GTNAHTILES (443 aa)) form the Ketosynthase family 3 (KS3) domain. Residues cysteine 194, histidine 333, and histidine 382 each act as for beta-ketoacyl synthase activity in the active site. A malonyl-CoA:ACP transacylase (MAT) domain region spans residues 578 to 888 (VFTGQGAQWP…LLYKGVLERF (311 aa)). The N-terminal hotdog fold stretch occupies residues 958-1092 (HPLLGFRSVD…GDILLSHFAK (135 aa)). The segment at 958 to 1263 (HPLLGFRSVD…QVEGLKFSCM (306 aa)) is dehydratase (DH) domain. In terms of domain architecture, PKS/mFAS DH spans 958–1269 (HPLLGFRSVD…FSCMYPAQET (312 aa)). Catalysis depends on histidine 990, which acts as the Proton acceptor; for dehydratase activity. Positions 1111 to 1269 (MSSVEPSLFY…FSCMYPAQET (159 aa)) are C-terminal hotdog fold. The active-site Proton donor; for dehydratase activity is aspartate 1170. The segment at 1976–2164 (SPNKTYLLVG…VVGVGYVARA (189 aa)) is ketoreductase (KR) domain. A Carrier domain is found at 2273-2347 (EILSGSLKQK…GLCLEAIGQW (75 aa)). O-(pantetheine 4'-phosphoryl)serine is present on serine 2307.

It functions in the pathway mycotoxin biosynthesis. Reducing polyketide synthase; part of the gene clusters that mediate the biosynthesis of the host-selective toxins (HSTs) AF-toxins responsible for Alternaria black spot of strawberry disease by the strawberry pathotype. AF-toxin I and III are valine derivatives of 2,3-dyhydroxy-isovaleric acid and 2-hydroxy-isovaleric acid respectively, while AF II is an isoleucine derivative of 2-hydroxy-valeric acid. These derivatives are bound to a 9,10-epoxy-8-hydroxy-9-methyl-decatrienoic acid (EDA) moiety. On cellular level, AF-toxins affect plasma membrane of susceptible cells and cause a sudden increase in loss of K(+) after a few minutes of toxin treatment. The aldo-keto reductase AFTS1 catalyzes the conversion of 2-keto-isovaleric acid (2-KIV) to 2-hydroxy-isovaleric acid (2-HIV) by reduction of its ketone to an alcohol. The acyl-CoA ligase AFT1, the hydrolase AFT2 and the enoyl-CoA hydratases AFT3 and AFT6, but also the polyketide synthase AFT9, the acyl-CoA dehydrogenase AFT10, the cytochrome P450 monooxygenase AFT11 and the oxidoreductase AFT12 are all involved in the biosynthesis of the AK-, AF- and ACT-toxin common EDA structural moiety. The exact function of each enzyme, and of additional enzymes identified within the AF-toxin clusters have still to be determined. This chain is Reducing polyketide synthase AFT16-1, found in Alternaria alternata (Alternaria rot fungus).